The sequence spans 616 residues: Chaperone protein HscA (616 aa).

It belongs to the heat shock protein 70 family.

Its function is as follows. Chaperone involved in the maturation of iron-sulfur cluster-containing proteins. Has a low intrinsic ATPase activity which is markedly stimulated by HscB. Involved in the maturation of IscU. The protein is Chaperone protein HscA of Salmonella arizonae (strain ATCC BAA-731 / CDC346-86 / RSK2980).